The primary structure comprises 152 residues: Deoxyuridine 5'-triphosphate nucleotidohydrolase (152 aa).

Substrate contacts are provided by residues 71–73 (RSG), Asn84, 88–90 (LID), and Met98.

It belongs to the dUTPase family. Mg(2+) serves as cofactor.

It carries out the reaction dUTP + H2O = dUMP + diphosphate + H(+). Its pathway is pyrimidine metabolism; dUMP biosynthesis; dUMP from dCTP (dUTP route): step 2/2. In terms of biological role, this enzyme is involved in nucleotide metabolism: it produces dUMP, the immediate precursor of thymidine nucleotides and it decreases the intracellular concentration of dUTP so that uracil cannot be incorporated into DNA. The polypeptide is Deoxyuridine 5'-triphosphate nucleotidohydrolase (Citrobacter koseri (strain ATCC BAA-895 / CDC 4225-83 / SGSC4696)).